The sequence spans 389 residues: Chalcone synthase (389 aa).

Cys164 is a catalytic residue.

Belongs to the thiolase-like superfamily. Chalcone/stilbene synthases family.

It carries out the reaction (E)-4-coumaroyl-CoA + 3 malonyl-CoA + 3 H(+) = 2',4,4',6'-tetrahydroxychalcone + 3 CO2 + 4 CoA. Its pathway is secondary metabolite biosynthesis; flavonoid biosynthesis. Functionally, the primary product of this enzyme is 4,2',4',6'-tetrahydroxychalcone (also termed naringenin-chalcone or chalcone) which can under specific conditions spontaneously isomerize into naringenin. The chain is Chalcone synthase (CHS) from Pueraria montana var. lobata (Kudzu vine).